Here is a 366-residue protein sequence, read N- to C-terminus: Ribosomal RNA large subunit methyltransferase M (366 aa).

S-adenosyl-L-methionine contacts are provided by residues S188, 221–224 (CPGG), D240, D260, and D277. K306 (proton acceptor) is an active-site residue.

It belongs to the class I-like SAM-binding methyltransferase superfamily. RNA methyltransferase RlmE family. RlmM subfamily. In terms of assembly, monomer.

It is found in the cytoplasm. The catalysed reaction is cytidine(2498) in 23S rRNA + S-adenosyl-L-methionine = 2'-O-methylcytidine(2498) in 23S rRNA + S-adenosyl-L-homocysteine + H(+). Functionally, catalyzes the 2'-O-methylation at nucleotide C2498 in 23S rRNA. The polypeptide is Ribosomal RNA large subunit methyltransferase M (Erwinia tasmaniensis (strain DSM 17950 / CFBP 7177 / CIP 109463 / NCPPB 4357 / Et1/99)).